A 194-amino-acid polypeptide reads, in one-letter code: Lytic chitin monooxygenase (194 aa).

The N-terminal stretch at 1 to 28 is a signal peptide; that stretch reads MKKSLLTIVLAFSFVLGGAALAPTVSEA. Positions 29 and 114 each coordinate Cu cation. The Chitin-binding type-4 domain occupies 29–191; sequence HGYVASPGSR…VNAFYQAIDV (163 aa).

Cu(2+) serves as cofactor.

The protein resides in the secreted. The catalysed reaction is [(1-&gt;4)-N-acetyl-beta-D-glucosaminyl]n+m + reduced acceptor + O2 = [(1-&gt;4)-N-acetyl-beta-D-glucosaminyl]m-1-(1-&gt;4)-2-(acetylamino)-2-deoxy-D-glucono-1,5-lactone + [(1-&gt;4)-N-acetyl-beta-D-glucosaminyl]n + acceptor + H2O.. It functions in the pathway glycan degradation; chitin degradation. Its function is as follows. Involved in chitin degradation. Catalyzes the oxidative cleavage of glycosidic bonds in both alpha- and beta-chitin via a copper-dependent mechanism, leading to oxidized chitooligosaccharides with a dominance of even-numbered products. Acts synergistically with the chitinase EfChi18A, and combining the two enzymes leads to rapid and complete depolymerization of crystalline chitin, especially with beta-chitin as a substrate. Is likely involved in a chitin degradation pathway that allows E.faecalis V583 to grow on chitin as a carbon source. The chain is Lytic chitin monooxygenase from Enterococcus faecalis (strain ATCC 700802 / V583).